The chain runs to 109 residues: Cell division protein ZapA (109 aa).

Residues 22 to 99 adopt a coiled-coil conformation; the sequence is EQQDALNMAA…IEQALLEQGR (78 aa).

Belongs to the ZapA family. Type 1 subfamily. Homodimer. Interacts with FtsZ.

Its subcellular location is the cytoplasm. Its function is as follows. Activator of cell division through the inhibition of FtsZ GTPase activity, therefore promoting FtsZ assembly into bundles of protofilaments necessary for the formation of the division Z ring. It is recruited early at mid-cell but it is not essential for cell division. In Yersinia pseudotuberculosis serotype O:1b (strain IP 31758), this protein is Cell division protein ZapA.